The sequence spans 389 residues: MPLENLEEEGLPKNPDLRIAQLRFLLSLPEHRGDAAVRDELMAAVRDNNMAPYYEALCKSLEWQMDVDLLNKMKKANEDELKRLDEELEDAEKNLGESEIRDAMMAKAEYLCRIGDKEGALTAFRRTYDKTVALGHRLDIVFYLLRIGLFYMDNDLITRNTEKAKSLIEEGGDWDRRNRLKVYQGLYCVAIRDFKQAAELFLDTVSTFTSYELMDYKTFVTYTVYVSMIALERPDLREKVIKGAEILEVLHSLPAVRQYLFSLYECRYSVFFQSLAIVEQEMKKDWLFAPHYRYYVREMRIHAYSQLLESYRSLTLGYMAEAFGVGVEFIDQELSRFIAAGRLHCKIDKVNEVVETNRPDSKNWQYQETIKKGGLLLNRVQKLSRVINM.

A PCI domain is found at 193-361 (DFKQAAELFL…EVVETNRPDS (169 aa)).

Belongs to the proteasome subunit S10 family. Component of the 19S proteasome regulatory particle complex. The 26S proteasome consists of a 20S core particle (CP) and two 19S regulatory subunits (RP). The regulatory particle is made of a lid composed of 9 subunits including PSMD6, a base containing 6 ATPases and few additional components.

In terms of biological role, component of the 26S proteasome, a multiprotein complex involved in the ATP-dependent degradation of ubiquitinated proteins. This complex plays a key role in the maintenance of protein homeostasis by removing misfolded or damaged proteins, which could impair cellular functions, and by removing proteins whose functions are no longer required. Therefore, the proteasome participates in numerous cellular processes, including cell cycle progression, apoptosis, or DNA damage repair. This chain is 26S proteasome non-ATPase regulatory subunit 6 (PSMD6), found in Bos taurus (Bovine).